Reading from the N-terminus, the 87-residue chain is Large ribosomal subunit protein bL27 (87 aa).

The tract at residues 1 to 25 (MAHKKGASSSRNGRDSNAQRLGVKR) is disordered. Over residues 7 to 19 (ASSSRNGRDSNAQ) the composition is skewed to polar residues.

Belongs to the bacterial ribosomal protein bL27 family.

The chain is Large ribosomal subunit protein bL27 from Rhodococcus opacus (strain B4).